We begin with the raw amino-acid sequence, 36 residues long: Photosystem I reaction center subunit VIII (36 aa).

A helical transmembrane segment spans residues 9–29 (IFVPLVGLVFPAIAMASLSLY).

It belongs to the PsaI family.

It is found in the plastid. It localises to the chloroplast thylakoid membrane. May help in the organization of the PsaL subunit. In Phalaenopsis aphrodite subsp. formosana (Moth orchid), this protein is Photosystem I reaction center subunit VIII.